Consider the following 112-residue polypeptide: Type III inner-rod protein PscI (112 aa).

It belongs to the YscI/HrpB family. As to quaternary structure, homomultimer (through its C-terminal region).

Its function is as follows. Component of the type III secretion (T3S) injectisome that translocates effector toxins into host cells, facilitating the establishment and dissemination of infection. Polymerizes into flexible and regularly twisted fibrils and plays an essential role in needle assembly. The chain is Type III inner-rod protein PscI (pscI) from Pseudomonas aeruginosa (strain ATCC 15692 / DSM 22644 / CIP 104116 / JCM 14847 / LMG 12228 / 1C / PRS 101 / PAO1).